The chain runs to 115 residues: U3-lycotoxin-Ls1p (115 aa).

A signal peptide spans 1–20 (MKFVLLFGVLLVTLFSYSSA). Residues 21–44 (EMFDDFDQADEDELLSLIEKEEAR) constitute a propeptide that is removed on maturation. 4 disulfide bridges follow: Cys48/Cys63, Cys55/Cys72, Cys62/Cys87, and Cys74/Cys85.

This sequence belongs to the neurotoxin 19 (CSTX) family. 01 subfamily. In terms of tissue distribution, expressed by the venom gland.

It localises to the secreted. The protein is U3-lycotoxin-Ls1p of Lycosa singoriensis (Wolf spider).